Here is a 901-residue protein sequence, read N- to C-terminus: DNA mismatch repair protein MutS (901 aa).

The span at 1–12 (MKYSASTSTPKS) shows a compositional bias: polar residues. Residues 1 to 25 (MKYSASTSTPKSAQPKEEELENSLP) are disordered. 679–686 (GPNASGKS) serves as a coordination point for ATP.

It belongs to the DNA mismatch repair MutS family.

Functionally, this protein is involved in the repair of mismatches in DNA. It is possible that it carries out the mismatch recognition step. This protein has a weak ATPase activity. This chain is DNA mismatch repair protein MutS, found in Trichodesmium erythraeum (strain IMS101).